The primary structure comprises 352 residues: C-C chemokine receptor type 5 (352 aa).

The Extracellular portion of the chain corresponds to 1-30; sequence MDYSMSTALYDIDYGMSEPCQKIDVKQVAA. Tyrosine 3 is modified (sulfotyrosine). A glycan (O-linked (GalNAc...) serine) is linked at serine 6. Tyrosine 10 and tyrosine 14 each carry sulfotyrosine. The O-linked (GalNAc...) serine glycan is linked to serine 17. Disulfide bonds link cysteine 20–cysteine 269 and cysteine 101–cysteine 178. The helical transmembrane segment at 31-58 threads the bilayer; sequence RLLPPLYSLVFIFGFVGNLLVVLILITC. Over 59–68 the chain is Cytoplasmic; that stretch reads KKLKSMTDIY. The chain crosses the membrane as a helical span at residues 69–89; that stretch reads LLNLAISDLLFLLTLPLWAHY. The Extracellular segment spans residues 90–102; it reads AAAEWDFGGAMCK. A helical membrane pass occupies residues 103–124; that stretch reads VFTGMYHMGYFGGIFFIILLTI. Residues 125–141 lie on the Cytoplasmic side of the membrane; the sequence is DRYLAIVHAVFALKART. Residues 142-166 form a helical membrane-spanning segment; the sequence is VTFGVVTSGVTWVAAILVSLPDIIF. Residues 167–198 lie on the Extracellular side of the membrane; that stretch reads TRSQKEGFRCSCSPHFPASQYQFWKNFHTIMR. The chain crosses the membrane as a helical span at residues 199-218; it reads NILSLVLPLLVMIVCYSGIL. At 219–235 the chain is on the cytoplasmic side; it reads KTLLRCRNEKRRHRAVR. The helical transmembrane segment at 236-260 threads the bilayer; that stretch reads LIFAIMVVYFLFWAPYNVVLLLNTF. Over 261–277 the chain is Extracellular; that stretch reads QEFFGLNNCSSSNRLDR. Residues 278 to 301 traverse the membrane as a helical segment; sequence AMQVTETLGMTHCCINPVVYAFVG. The Cytoplasmic segment spans residues 302-352; it reads EKFRSYLSAFFRKHVAKRLCKHCPLLPRETPEPASSVYTRSTGEQEISVGL. S-palmitoyl cysteine attachment occurs at residues cysteine 321 and cysteine 324. The segment at 332–352 is disordered; sequence PEPASSVYTRSTGEQEISVGL. 4 positions are modified to phosphoserine; by BARK1: serine 336, serine 337, serine 342, and serine 349. Positions 337–346 are enriched in polar residues; that stretch reads SVYTRSTGEQ.

It belongs to the G-protein coupled receptor 1 family. As to quaternary structure, interacts with PRAF2. Efficient ligand binding to CCL3/MIP-1alpha and CCL4/MIP-1beta requires sulfation, O-glycosylation and sialic acid modifications. Glycosylation on Ser-6 is required for efficient binding of CCL4. Interacts with GRK2. Interacts with ARRB1 and ARRB2. Interacts with CNIH4. Interacts with S100A4; this interaction stimulates T-lymphocyte chemotaxis. In terms of processing, sulfated on at least 2 of the N-terminal tyrosines. Sulfation is required for efficient binding of the chemokines, CCL3 and CCL4. Post-translationally, O-glycosylated, but not N-glycosylated. Ser-6 appears to be the major site. Also sialylated glycans present which contribute to chemokine binding. Ser-17 may also be glycosylated and, if so, with small moieties such as a T-antigen. Palmitoylation in the C-terminal is important for cell surface expression. In terms of processing, phosphorylation on serine residues in the C-terminal is stimulated by binding CC chemokines especially by APO-RANTES.

It is found in the cell membrane. Receptor for a number of inflammatory CC-chemokines including CCL3/MIP-1-alpha, CCL4/MIP-1-beta and RANTES and subsequently transduces a signal by increasing the intracellular calcium ion level. May play a role in the control of granulocytic lineage proliferation or differentiation. Participates in T-lymphocyte migration to the infection site by acting as a chemotactic receptor. This is C-C chemokine receptor type 5 (CCR5) from Oryctolagus cuniculus (Rabbit).